The primary structure comprises 713 residues: Nucleoporin NUP82 (713 aa).

Positions 1–409 (MSQSSRLSAL…SDLNPLAGLK (409 aa)) are interaction with NUP116. The tract at residues 463-713 (TSISTEKSDT…VSQEFTTKTQ (251 aa)) is interaction with NSP1 and NUP159. The stretch at 582-713 (EAQNKKWDAQ…VSQEFTTKTQ (132 aa)) forms a coiled coil. A Bipartite nuclear localization signal motif is present at residues 607–623 (KKLSQIAESNKFKEKKI).

Component of the nuclear pore complex (NPC). NPC constitutes the exclusive means of nucleocytoplasmic transport. NPCs allow the passive diffusion of ions and small molecules and the active, nuclear transport receptor-mediated bidirectional transport of macromolecules such as proteins, RNAs, ribonucleoparticles (RNPs), and ribosomal subunits across the nuclear envelope. Due to its 8-fold rotational symmetry, all subunits are present with 8 copies or multiples thereof. NUP82 is part of the NUP82 subcomplex. This subcomplex is the base for interactions with NUP116 and GLE2, with NUP42 and GLE1 and with DYN2.

It localises to the nucleus. The protein resides in the nuclear pore complex. Its subcellular location is the nucleus membrane. Functionally, functions as a component of the nuclear pore complex (NPC). NPC components, collectively referred to as nucleoporins (NUPs), can play the role of both NPC structural components and of docking or interaction partners for transiently associated nuclear transport factors. It is specifically involved as part of the NUP82-NUP159-NSP1 subcomplex in nuclear mRNA and pre-ribosome export by acting as a linker tethering nucleoporins that are directly involved in nuclear transport to the NPC via its coiled-coil domain. The protein is Nucleoporin NUP82 (NUP82) of Saccharomyces cerevisiae (strain ATCC 204508 / S288c) (Baker's yeast).